The chain runs to 320 residues: Aspartate carbamoyltransferase catalytic subunit (320 aa).

Arg68 and Thr69 together coordinate carbamoyl phosphate. An L-aspartate-binding site is contributed by Lys96. 3 residues coordinate carbamoyl phosphate: Arg118, His148, and Gln151. L-aspartate contacts are provided by Arg181 and Arg236. Carbamoyl phosphate-binding residues include Gly277 and Pro278.

Belongs to the aspartate/ornithine carbamoyltransferase superfamily. ATCase family. Heterododecamer (2C3:3R2) of six catalytic PyrB chains organized as two trimers (C3), and six regulatory PyrI chains organized as three dimers (R2).

It carries out the reaction carbamoyl phosphate + L-aspartate = N-carbamoyl-L-aspartate + phosphate + H(+). It functions in the pathway pyrimidine metabolism; UMP biosynthesis via de novo pathway; (S)-dihydroorotate from bicarbonate: step 2/3. Its function is as follows. Catalyzes the condensation of carbamoyl phosphate and aspartate to form carbamoyl aspartate and inorganic phosphate, the committed step in the de novo pyrimidine nucleotide biosynthesis pathway. The polypeptide is Aspartate carbamoyltransferase catalytic subunit (Polaromonas naphthalenivorans (strain CJ2)).